Here is a 428-residue protein sequence, read N- to C-terminus: C4-dicarboxylate transport protein (428 aa).

8 consecutive transmembrane segments (helical) span residues 8 to 28 (SLYFQVLTAIAIGILLGHFYP), 44 to 64 (LIKMIIAPVIFCTVVTGIAGM), 76 to 96 (VALLYFEIVSTIALIIGLIIV), 142 to 162 (IGAFASGNILQVLLFAVLFGF), 184 to 204 (VIFGIINMIMRLAPIGAFGAM), 222 to 242 (LIICFYITCILFVVLVLGSIA), 326 to 346 (IVHQITLLIVLLLSSKGAAGV), and 352 to 372 (IVLAATLSAVGHLPVAGLALI).

It belongs to the dicarboxylate/amino acid:cation symporter (DAACS) (TC 2.A.23) family.

The protein resides in the cell inner membrane. Responsible for the transport of dicarboxylates such as succinate, fumarate, and malate from the periplasm across the membrane. The protein is C4-dicarboxylate transport protein of Escherichia coli O139:H28 (strain E24377A / ETEC).